A 245-amino-acid polypeptide reads, in one-letter code: 1-(5-phosphoribosyl)-5-[(5-phosphoribosylamino)methylideneamino] imidazole-4-carboxamide isomerase (245 aa).

Residue Asp7 is the Proton acceptor of the active site. The active-site Proton donor is Asp129.

It belongs to the HisA/HisF family.

The protein localises to the cytoplasm. It carries out the reaction 1-(5-phospho-beta-D-ribosyl)-5-[(5-phospho-beta-D-ribosylamino)methylideneamino]imidazole-4-carboxamide = 5-[(5-phospho-1-deoxy-D-ribulos-1-ylimino)methylamino]-1-(5-phospho-beta-D-ribosyl)imidazole-4-carboxamide. It participates in amino-acid biosynthesis; L-histidine biosynthesis; L-histidine from 5-phospho-alpha-D-ribose 1-diphosphate: step 4/9. This Escherichia coli O81 (strain ED1a) protein is 1-(5-phosphoribosyl)-5-[(5-phosphoribosylamino)methylideneamino] imidazole-4-carboxamide isomerase.